A 265-amino-acid chain; its full sequence is MELASAHLHKGQVPWVGLLLTASLLTYWSPATTAQVTVEAVPPNVTADNNVLLLVHNLPQTLRVFYWYKGNSGAGHNEIGRFVTSINRSKMGLAHSGRETIYSNGSLFFQSVTKNDEGVYTLYMLDQNFEITPISVRFHVHPSLLPSLSPPTTGQVTVEAVPPNVAEGENVLLLVHNLPRTLRAIYWYRGTTAGERNEIARFITASNKIILGPAHSDREIIYNNGSLFFQGVTKNDEGAYALDMLFQNFDHTLMPVQFNVHAKKQ.

An N-terminal signal peptide occupies residues 1 to 33; it reads MELASAHLHKGQVPWVGLLLTASLLTYWSPATT. Ig-like V-type domains follow at residues 35 to 142 and 155 to 262; these read QVTV…HVHP and QVTV…NVHA. N-linked (GlcNAc...) asparagine glycans are attached at residues asparagine 44, asparagine 87, and asparagine 224.

This sequence belongs to the immunoglobulin superfamily. CEA family. As to expression, abundant in seminal vesicle and traces in epididymis and prostate (at protein level). Highly expressed in seminal vesicle, minor in colon and placenta and, to a lesser extent, in small intestine, caecum, stomach, salivary gland and bone marrow.

Its subcellular location is the secreted. The protein resides in the extracellular space. Its function is as follows. May interact with other CEACAM proteins on the sperm surface. In Mus musculus (Mouse), this protein is Cell adhesion molecule CEACAM10.